Here is a 367-residue protein sequence, read N- to C-terminus: UDP-N-acetylglucosamine--N-acetylmuramyl-(pentapeptide) pyrophosphoryl-undecaprenol N-acetylglucosamine transferase (367 aa).

Residues 13–15, Arg168, Ser196, Ile252, and Gln297 each bind UDP-N-acetyl-alpha-D-glucosamine; that span reads TGG.

The protein belongs to the glycosyltransferase 28 family. MurG subfamily.

It is found in the cell inner membrane. The catalysed reaction is di-trans,octa-cis-undecaprenyl diphospho-N-acetyl-alpha-D-muramoyl-L-alanyl-D-glutamyl-meso-2,6-diaminopimeloyl-D-alanyl-D-alanine + UDP-N-acetyl-alpha-D-glucosamine = di-trans,octa-cis-undecaprenyl diphospho-[N-acetyl-alpha-D-glucosaminyl-(1-&gt;4)]-N-acetyl-alpha-D-muramoyl-L-alanyl-D-glutamyl-meso-2,6-diaminopimeloyl-D-alanyl-D-alanine + UDP + H(+). It functions in the pathway cell wall biogenesis; peptidoglycan biosynthesis. Functionally, cell wall formation. Catalyzes the transfer of a GlcNAc subunit on undecaprenyl-pyrophosphoryl-MurNAc-pentapeptide (lipid intermediate I) to form undecaprenyl-pyrophosphoryl-MurNAc-(pentapeptide)GlcNAc (lipid intermediate II). The chain is UDP-N-acetylglucosamine--N-acetylmuramyl-(pentapeptide) pyrophosphoryl-undecaprenol N-acetylglucosamine transferase from Methylibium petroleiphilum (strain ATCC BAA-1232 / LMG 22953 / PM1).